The sequence spans 1407 residues: MLGLRTHGLDRYEHYIRRPSDFGKLELQDWLNHKSFRVSPNLLIDSSTTREWNEPELFYQNTEDETWVRPCVGPKLEPSMMMLRYHDSNIGQMPQFCYPISSPINFKPVLKYILQERSELSDGFPQKYNTLIGSLFDIDKNPETLDDSDIEALDDIEMSSDSGNVKEPKIELQALEEIQQKHFSLIVSNNGIFQTGSTSITYIQSGISGSIAIKPNNVAILILLTQPSGHLLSILPLDDGKETYLLQYWNLGQKGQWNIIKHQNEKQFVLIHKELGICKFFEFHLPFTFQLVNNLTLTDSVIMNGSFFPTNYTDLDPYFIIFITAIRYERIVYFVIEWNNNEIKKKEVYQLTVFDGEKTNMTIPIGLNACLVETPLKFSLVSANQIMSGETEFHSFQLKALKGIKSFFPAPLLLLKLQELHPHTFKKFQYCTIISSSTGNICFCVTERSTIVNGNLKFYELTRFKGLKSISPLPSNPINLDSRSSSYVLVVISFSRTLELTLSLEDLRCLDKKDVIKPLKNITFKHTIDSSTEENSQILAFTSSKFYNTHTGSNINDTRNSQVWLTSPNAITQPCIDYKLRKTHQLIHLKQFQIFRHLRIWKCKNLDIALLQRLGINQSNTESSLIFATDAVSNNRIFLLDLTMTTTIDNDDPVQGLINIEDLLCDTENETILLNFTKNNLIQVTRDTIYIDPIGGDKELRKISPGWEFENVTYNDGILIVWNAGLGCVSYIENIDAVDESGALVSNLSSSKGMSKFFKQLGTVTSVNFQIKESTDDPTKYDIWILLPDCVIRTPFSDWISDSLDFSDVYILSVQQALINGPYFCSLDYESYFEVHTLQNNCFKKGSRCTSRVNFQGKDIKFRSFGVNQCLAFSAFEIFVINLTPIHDSRELDFYKLKLPHLGNNNSILEVCPDIENNQLFILYSDGLRILELSYLTSNNGNFLLKSTRSKNKKFLYLDKINRMLVLNQDLREWECIRLSDGKAVGLDSQLLKDDSEEILEIKELPIATEDNPLEKKTVLLISFTSSLKLVLLTAAKNKISNQIIDSYKLDNSRLLNHLVITPRGEIFFLDYKVMGTDNEMSFNKLKVTKHCIDQEERNNTTLRLTLETRFTFKSWSTVKTFTVVGDNIIATTNMGEKLYLIKDFSSSSDESRRVYPLEMYPDSKVQKIIPLNECCFVVAAYCGNRNDLDSRLIFYSLPTIKVGLNNETGSLPDEYGNGRVDDIFEVDFPEGFQFGTMALYDVLHGERHVNRYSEGIRSENDEAEVALRQRRNLLLFWRNHSSTPKPSLRRAATIVYEDHVSSRYFEDISSILGSTAMRTKRLSPYNAVALDKPIQDISYDPAVQTLYVLMADQTIHKFGKDRLPCQDEYEPRWNSGYLVSRRSIVKSDLICEVGLWNLSDNCKNTV.

The required for interaction with MMS22 stretch occupies residues 1–600 (MLGLRTHGLD…QFQIFRHLRI (600 aa)). Threonine 1294 carries the phosphothreonine modification.

In terms of assembly, component of multiple cullin-RING ligases (CRLs) composed of 4 subunits: the RING protein HRT1, the cullin RTT101, a linker protein MMS1, and one of many alternative substrate receptors belonging to a protein family described as DCAF (DDB1- and CUL4-associated factor). Component of a RTT101(MMS1-MMS22) complex with the substrate receptor MMS22. This complex further interacts with RTT107 and CTF4 to form RTT101-MMS1-MMS22-RTT107 and RTT101-MMS1-MMS22-CTF4 complexes respectively. Component of a RTT101(MSS1-CRT10) complex with the substrate receptor CRT10. Component of a RTT101(MSS1-ESC2) complex with the potential substrate receptor ESC2. Component of a RTT101(MSS1-ORC5) complex with the potential substrate receptor ORC5. Interacts with RTT101 (via N-ter). Interacts (via N-ter) with MMS22 (via C-ter). Interacts with CRT10.

The protein localises to the nucleus. Functionally, component of multiple cullin-RING-based E3 ubiquitin-protein ligase complexes (CRLs), which mediate the ubiquitination of target proteins. The CRL associates with CDC34 as the E2 ubiquitin-conjugating enzyme. The functional specificity of the CRL depends on the type of the associated substrate receptor protein. RTT101(MMS1-MMS22) promotes fork progression through damaged DNA or natural pause sites by stabilizing replication proteins like the replication fork-pausing complex (FPC) and leading-strand polymerase at stalled replication forks. RTT101(MMS1-MMS22) ubiquitinates the acetylated histones H3K56ac-H4 at lysine residues H3K121, H3K122 and H3K125. Ubiquitination is required for efficient histone deposition during replication-coupled nucleosome assembly, probably by facilitating the transfer of H3-H4 from ASF1 to other chaperones involved in histone deposition. RTT101(MMS1-CRT10) may regulate nucleotide synthesis through transcriptional regulation of ribonucleotide reductase. RTT101(MMS1) is also involved in the non-functional rRNA decay (NRD) of 25S rRNA through the selective, ubiquitination-dependent degradation of nonfunctional ribosomal particles. Involved in the regulation of TY1 transposition. This chain is E3 ubiquitin-protein ligase linker protein MMS1 (MMS1), found in Saccharomyces cerevisiae (strain ATCC 204508 / S288c) (Baker's yeast).